The sequence spans 370 residues: DNA replication and repair protein RecF (370 aa).

30–37 (GPNGSGKT) contacts ATP.

This sequence belongs to the RecF family.

Its subcellular location is the cytoplasm. Functionally, the RecF protein is involved in DNA metabolism; it is required for DNA replication and normal SOS inducibility. RecF binds preferentially to single-stranded, linear DNA. It also seems to bind ATP. The sequence is that of DNA replication and repair protein RecF from Prosthecochloris aestuarii (strain DSM 271 / SK 413).